The primary structure comprises 276 residues: Sulfur carrier protein FdhD (276 aa).

Residue Cys-122 is the Cysteine persulfide intermediate of the active site. Phe-259–Lys-264 provides a ligand contact to Mo-bis(molybdopterin guanine dinucleotide).

The protein belongs to the FdhD family.

It localises to the cytoplasm. Required for formate dehydrogenase (FDH) activity. Acts as a sulfur carrier protein that transfers sulfur from IscS to the molybdenum cofactor prior to its insertion into FDH. The sequence is that of Sulfur carrier protein FdhD from Photorhabdus laumondii subsp. laumondii (strain DSM 15139 / CIP 105565 / TT01) (Photorhabdus luminescens subsp. laumondii).